Here is a 100-residue protein sequence, read N- to C-terminus: Mini zinc finger protein 2 (100 aa).

A disordered region spans residues 1–26 (MRKRQVVLRRASPEEPSRSSSTASSL). The ZF-HD dimerization-type; degenerate zinc-finger motif lies at 33–83 (YGECQKNHAAAVGGYAVDGCREFMASRGEEGTVAALTCAACGCHRSFHRRE).

Homo- and heterodimers. Interacts with ZHD1, ZHD3, ZHD5, ZHD8, ZHD10 and ZHD13. As to expression, mostly expressed in stems, flowers and siliques, and, to a lower extent, in inflorescence.

The protein localises to the cytoplasm. Functionally, inhibits zinc finger homeodomain (ZHD) transcription factors by interacting with them to prevent both their nuclear localization and their DNA-binding properties. Involved in integrating signals from multiple hormones by regulating the expression of specific genes. The chain is Mini zinc finger protein 2 (MIF2) from Arabidopsis thaliana (Mouse-ear cress).